Consider the following 207-residue polypeptide: dTTP/UTP pyrophosphatase (207 aa).

Residue aspartate 79 is the Proton acceptor of the active site.

The protein belongs to the Maf family. YhdE subfamily. A divalent metal cation is required as a cofactor.

The protein resides in the cytoplasm. It carries out the reaction dTTP + H2O = dTMP + diphosphate + H(+). The catalysed reaction is UTP + H2O = UMP + diphosphate + H(+). In terms of biological role, nucleoside triphosphate pyrophosphatase that hydrolyzes dTTP and UTP. May have a dual role in cell division arrest and in preventing the incorporation of modified nucleotides into cellular nucleic acids. The sequence is that of dTTP/UTP pyrophosphatase from Nitrobacter winogradskyi (strain ATCC 25391 / DSM 10237 / CIP 104748 / NCIMB 11846 / Nb-255).